We begin with the raw amino-acid sequence, 171 residues long: Adenine phosphoribosyltransferase (171 aa).

Belongs to the purine/pyrimidine phosphoribosyltransferase family. Homodimer.

It localises to the cytoplasm. The catalysed reaction is AMP + diphosphate = 5-phospho-alpha-D-ribose 1-diphosphate + adenine. It functions in the pathway purine metabolism; AMP biosynthesis via salvage pathway; AMP from adenine: step 1/1. Its function is as follows. Catalyzes a salvage reaction resulting in the formation of AMP, that is energically less costly than de novo synthesis. This chain is Adenine phosphoribosyltransferase, found in Mycoplasma mobile (strain ATCC 43663 / 163K / NCTC 11711) (Mesomycoplasma mobile).